Here is a 335-residue protein sequence, read N- to C-terminus: Legumin type B (335 aa).

Disordered stretches follow at residues 47-87 and 102-155; these read PETQ…GNSV and TEED…GRNG. Basic and acidic residues predominate over residues 105–118; sequence DTAKRLRSPRDKRN. Residues 135–144 are compositionally biased toward acidic residues; it reads QQEEEEEEEE. Positions 167–314 constitute a Cupin type-1 domain; that stretch reads ENIAQPARAD…AFGLRQRQVT (148 aa).

Belongs to the 11S seed storage protein (globulins) family. Hexamer; each subunit is composed of an acidic and a basic chain derived from a single precursor and linked by a disulfide bond.

In terms of biological role, this protein found in the seeds of many leguminous and non-leguminous plants is the source of sulfur-containing amino acids in seed meals. This Vicia faba (Broad bean) protein is Legumin type B (LEB2).